Consider the following 210-residue polypeptide: Probable GTP-binding protein EngB (210 aa).

One can recognise an EngB-type G domain in the interval 25 to 199; it reads RGIEVAFAGR…RQKLDSWFSE (175 aa). GTP-binding positions include 33 to 40, 60 to 64, 78 to 81, 145 to 148, and 178 to 180; these read GRSNAGKS, GRTQL, DLPG, TKAD, and FSS. Mg(2+) contacts are provided by serine 40 and threonine 62.

The protein belongs to the TRAFAC class TrmE-Era-EngA-EngB-Septin-like GTPase superfamily. EngB GTPase family. Mg(2+) is required as a cofactor.

Its function is as follows. Necessary for normal cell division and for the maintenance of normal septation. The sequence is that of Probable GTP-binding protein EngB from Salmonella paratyphi B (strain ATCC BAA-1250 / SPB7).